Reading from the N-terminus, the 257-residue chain is Phosphonates import ATP-binding protein PhnC (257 aa).

In terms of domain architecture, ABC transporter spans 4 to 248; sequence IEFKNVSKVY…VFSEIYGRTI (245 aa). ATP is bound at residue 37-44; it reads GLSGAGKS.

The protein belongs to the ABC transporter superfamily. Phosphonates importer (TC 3.A.1.9.1) family. The complex is composed of two ATP-binding proteins (PhnC), two transmembrane proteins (PhnE) and a solute-binding protein (PhnD).

The protein localises to the cell membrane. It catalyses the reaction phosphonate(out) + ATP + H2O = phosphonate(in) + ADP + phosphate + H(+). In terms of biological role, part of the ABC transporter complex PhnCDE involved in phosphonates import. Responsible for energy coupling to the transport system. The polypeptide is Phosphonates import ATP-binding protein PhnC (Staphylococcus aureus (strain COL)).